The sequence spans 368 residues: tRNA/tmRNA (uracil-C(5))-methyltransferase (368 aa).

5 residues coordinate S-adenosyl-L-methionine: glutamine 190, tyrosine 218, asparagine 223, glutamate 239, and aspartate 301. The active-site Nucleophile is cysteine 326. Glutamate 360 functions as the Proton acceptor in the catalytic mechanism.

This sequence belongs to the class I-like SAM-binding methyltransferase superfamily. RNA M5U methyltransferase family. TrmA subfamily.

The enzyme catalyses uridine(54) in tRNA + S-adenosyl-L-methionine = 5-methyluridine(54) in tRNA + S-adenosyl-L-homocysteine + H(+). The catalysed reaction is uridine(341) in tmRNA + S-adenosyl-L-methionine = 5-methyluridine(341) in tmRNA + S-adenosyl-L-homocysteine + H(+). Functionally, dual-specificity methyltransferase that catalyzes the formation of 5-methyluridine at position 54 (m5U54) in all tRNAs, and that of position 341 (m5U341) in tmRNA (transfer-mRNA). In Photobacterium profundum (strain SS9), this protein is tRNA/tmRNA (uracil-C(5))-methyltransferase.